The primary structure comprises 302 residues: Nucleotide-binding protein Rsph17025_2562 (302 aa).

15-22 lines the ATP pocket; that stretch reads GPSGAGRT. 62-65 is a GTP binding site; sequence DVRN.

This sequence belongs to the RapZ-like family.

In terms of biological role, displays ATPase and GTPase activities. This is Nucleotide-binding protein Rsph17025_2562 from Cereibacter sphaeroides (strain ATCC 17025 / ATH 2.4.3) (Rhodobacter sphaeroides).